A 371-amino-acid chain; its full sequence is Peptidyl-prolyl cis-trans isomerase D (371 aa).

The PPIase cyclophilin-type domain occupies 11 to 172 (FFDIQIGNEK…KDVTIVECGE (162 aa)). Residues 175–195 (GQDYDDADKQTPDATGDPYED) are disordered. 3 TPR repeats span residues 214-247 (ASEL…LHEF), 267-300 (FALH…ANAA), and 308-341 (AKAY…APGD).

This sequence belongs to the cyclophilin-type PPIase family. PPIase D subfamily.

It localises to the cytoplasm. The catalysed reaction is [protein]-peptidylproline (omega=180) = [protein]-peptidylproline (omega=0). PPIases accelerate the folding of proteins. It catalyzes the cis-trans isomerization of proline imidic peptide bonds in oligopeptides. This Aspergillus oryzae (strain ATCC 42149 / RIB 40) (Yellow koji mold) protein is Peptidyl-prolyl cis-trans isomerase D (cpr6).